A 231-amino-acid chain; its full sequence is MTQDELKRLVGQAAADYVIQNVPEGAVIGVGTGSTANCFIDALAAVKSRYRGAVSSSVATTERLKSHGIKVFDLNEIDALQVYVDGADEIDAGGAMIKGGGGALTREKIVASVADTFVCIADGSKRVPVLGAFPLPIEVVPMARTAIGRRVTALGGVPVLRVTKDGAPYITDNGNEIIDVKGLQIADPRGFEARVNAWPGVVTVGLFAERGANLCLLGTENGVETIVYPAA.

Substrate is bound by residues 32–35 (TGST), 85–88 (DGAD), and 98–101 (KGGG). Catalysis depends on Glu-107, which acts as the Proton acceptor. Position 125 (Lys-125) interacts with substrate.

This sequence belongs to the ribose 5-phosphate isomerase family. As to quaternary structure, homodimer.

It catalyses the reaction aldehydo-D-ribose 5-phosphate = D-ribulose 5-phosphate. The protein operates within carbohydrate degradation; pentose phosphate pathway; D-ribose 5-phosphate from D-ribulose 5-phosphate (non-oxidative stage): step 1/1. Functionally, catalyzes the reversible conversion of ribose-5-phosphate to ribulose 5-phosphate. The chain is Ribose-5-phosphate isomerase A from Burkholderia cenocepacia (strain ATCC BAA-245 / DSM 16553 / LMG 16656 / NCTC 13227 / J2315 / CF5610) (Burkholderia cepacia (strain J2315)).